The chain runs to 1135 residues: Nonribosomal peptide synthetase 9 (1135 aa).

Residues 23–77 (TKQITTATYIKLAWAVVISCNTGSNDTVFGITVNGRGAPIDGAGEMTGATIATIP) are condensation 1. The segment at 177–562 (SYAELIRSAN…RRIDEIQEAT (386 aa)) is adenylation. The disordered stretch occupies residues 485–507 (GPSPPVGRSSSNRAGSGRCAMGS). Residues 491-502 (GRSSSNRAGSGR) show a composition bias toward low complexity. The Carrier domain maps to 672-748 (APSNRVEQDL…AIANKIGDVQ (77 aa)). S709 carries the post-translational modification O-(pantetheine 4'-phosphoryl)serine. Positions 746–999 (DVQRAAIKLV…TTLWPVVAQV (254 aa)) are condensation 2.

It belongs to the NRP synthetase family.

Nonribosomal peptide synthesis (NRPS) is a key mechanism responsible for the biosynthesis of bioactive metabolites which are potentially contributing to organismal virulence. The protein is Nonribosomal peptide synthetase 9 (NRPS9) of Aspergillus fumigatus (strain ATCC MYA-4609 / CBS 101355 / FGSC A1100 / Af293) (Neosartorya fumigata).